The sequence spans 316 residues: 4-hydroxy-3-methylbut-2-enyl diphosphate reductase (316 aa).

[4Fe-4S] cluster is bound at residue Cys-12. His-41 and His-74 together coordinate (2E)-4-hydroxy-3-methylbut-2-enyl diphosphate. Positions 41 and 74 each coordinate dimethylallyl diphosphate. Positions 41 and 74 each coordinate isopentenyl diphosphate. Cys-96 contacts [4Fe-4S] cluster. Residue His-124 coordinates (2E)-4-hydroxy-3-methylbut-2-enyl diphosphate. His-124 is a binding site for dimethylallyl diphosphate. His-124 provides a ligand contact to isopentenyl diphosphate. Glu-126 functions as the Proton donor in the catalytic mechanism. Position 169 (Thr-169) interacts with (2E)-4-hydroxy-3-methylbut-2-enyl diphosphate. Cys-199 lines the [4Fe-4S] cluster pocket. (2E)-4-hydroxy-3-methylbut-2-enyl diphosphate contacts are provided by Ser-227, Ser-228, Asn-229, and Ser-271. Ser-227, Ser-228, Asn-229, and Ser-271 together coordinate dimethylallyl diphosphate. Positions 227, 228, 229, and 271 each coordinate isopentenyl diphosphate.

Belongs to the IspH family. The cofactor is [4Fe-4S] cluster.

It catalyses the reaction isopentenyl diphosphate + 2 oxidized [2Fe-2S]-[ferredoxin] + H2O = (2E)-4-hydroxy-3-methylbut-2-enyl diphosphate + 2 reduced [2Fe-2S]-[ferredoxin] + 2 H(+). The enzyme catalyses dimethylallyl diphosphate + 2 oxidized [2Fe-2S]-[ferredoxin] + H2O = (2E)-4-hydroxy-3-methylbut-2-enyl diphosphate + 2 reduced [2Fe-2S]-[ferredoxin] + 2 H(+). It participates in isoprenoid biosynthesis; dimethylallyl diphosphate biosynthesis; dimethylallyl diphosphate from (2E)-4-hydroxy-3-methylbutenyl diphosphate: step 1/1. Its pathway is isoprenoid biosynthesis; isopentenyl diphosphate biosynthesis via DXP pathway; isopentenyl diphosphate from 1-deoxy-D-xylulose 5-phosphate: step 6/6. In terms of biological role, catalyzes the conversion of 1-hydroxy-2-methyl-2-(E)-butenyl 4-diphosphate (HMBPP) into a mixture of isopentenyl diphosphate (IPP) and dimethylallyl diphosphate (DMAPP). Acts in the terminal step of the DOXP/MEP pathway for isoprenoid precursor biosynthesis. The sequence is that of 4-hydroxy-3-methylbut-2-enyl diphosphate reductase from Stenotrophomonas maltophilia (strain R551-3).